Reading from the N-terminus, the 66-residue chain is Large ribosomal subunit protein bL35 (66 aa).

This sequence belongs to the bacterial ribosomal protein bL35 family.

The sequence is that of Large ribosomal subunit protein bL35 from Azorhizobium caulinodans (strain ATCC 43989 / DSM 5975 / JCM 20966 / LMG 6465 / NBRC 14845 / NCIMB 13405 / ORS 571).